Here is a 112-residue protein sequence, read N- to C-terminus: uncharacterized protein (112 aa).

The HTH cro/C1-type domain occupies 6 to 60; sequence LRQLRKAHKLTMEQLAEKIGIAKSSYGGYEAESKKPPLDKLVILARLYDVSVDYI. Positions 17-36 form a DNA-binding region, H-T-H motif; the sequence is MEQLAEKIGIAKSSYGGYEA.

This is an uncharacterized protein from Bacillus subtilis (strain 168).